The sequence spans 1372 residues: Disease resistance protein RRS1B (1372 aa).

Positions 2 to 137 (TESEQIVYIS…ETVRDVYEKL (136 aa)) constitute a TIR domain. One can recognise an NB-ARC domain in the interval 166-417 (VGIWGMPGIG…GCGFFPHVGI (252 aa)). 170–177 (GMPGIGKT) serves as a coordination point for ATP. The stretch at 491–515 (PEEIEGMFLDTSNLSFDIKHVAFDN) is one LRR 1 repeat. An LRR 2; degenerate repeat occupies 528 to 544 (NPEVHHVNNFLKGSLSS). LRR repeat units follow at residues 545–568 (LPNVLRLLHWENYPLQFLPQNFDP), 570–591 (HLVEINMPYSQLKKLWGGTKDL), 614–637 (AQNLEVVDLQGCTRLQSFPATGQL), 638–658 (LHLRVVNLSGCTEIKSFPEIP), 659–681 (PNIETLNLQGTGIIELPLSIVKP), 693–718 (IPGLSGVSNLEQSDLKPLTSLMKIST), 723–747 (PGKLSCLELNDCSRLRSLPNMVNLE), 749–767 (LKALDLSGCSELETIQGFP), 768–792 (RNLKELYLVGTAVRQVPQLPQSLEF), and 798–823 (CVSLKSIRLDFKKLPVHYTFSNCFDL). A Nuclear localization signal motif is present at residues 950–964 (INLHCWALGKAVERD). A DNA-binding region (WRKY) is located at residues 1174 to 1240 (DRGSRSSDLW…YISEHNHPFP (67 aa)). Disordered regions lie at residues 1246 to 1288 (LAGS…ASPP) and 1337 to 1372 (QTMFLSRRSSGGNMEAQGKNSSDDREVNLPSKILNR). Low complexity predominate over residues 1249 to 1269 (STRSSSSKCSDVTTSASSTVS). The span at 1270–1279 (QDKEGPDKSH) shows a compositional bias: basic and acidic residues. Over residues 1337–1348 (QTMFLSRRSSGG) the composition is skewed to polar residues.

This sequence belongs to the disease resistance TIR-NB-LRR family. As to quaternary structure, interacts with RPS4B. RPS4B-RRS1B heterodimer interacts with the bacterial effectors AvrRps4 and PopP2.

It localises to the nucleus. Transcription factor. Interacts specifically with the W box (5'-(T)TGAC[CT]-3'), a frequently occurring elicitor-responsive cis-acting element. Also acts as a disease resistance protein that specifically recognizes the AvrRps4 type III effector avirulence protein from P.syringae. Heterodimerization with RPS4B is required to form a functional complex to recognize AvrRps4 and to mediate the hypersensitive response. This Arabidopsis thaliana (Mouse-ear cress) protein is Disease resistance protein RRS1B.